We begin with the raw amino-acid sequence, 70 residues long: Homeobox protein CDX (70 aa).

A DNA-binding region (homeobox) is located at residues 1–60 (PDKYRVVYTDYQRLELEKEFHYSRYITMNRKAELAKSLDLTERQIKIWFQNRRAKERKIN).

The protein belongs to the Caudal homeobox family.

The protein resides in the nucleus. In Lineus sanguineus (Ribbon worm), this protein is Homeobox protein CDX (CDX).